The chain runs to 352 residues: MRVLAAMSGGVDSAVAAARAVDAGHDVTGVHLALSRSPESDRTGARGCCTLEDARDARRAADVLGIPFYVWDLAERFETEVIDQFVESYAAGRTPNPCVRCNERIKFAAVLDRALALGFDAVVTGHHARLDPDGTLRRSVDPAKDQSYVLGTLRPEQLGAARFPLGDSTKAQVRREAAARGLAVADKPDSHDICFISGGDTGGWLRERIGSRPGPIVDSRTGQTLGEHDGTFAFTVGQRRGLRLGHPAPDGRPRYVLDISPVTSTVTVGPAEELDIRRLVADRAAWPHEGVVTCQAQVRAHGGVVAAEAEARGDDLVVTLDTPVRGTAAGQAVVLYDGDRVLGGGHIRVTAA.

Residues 6-13 and Leu32 contribute to the ATP site; that span reads AMSGGVDS. The active-site Nucleophile is Cys101. Cys101 and Cys194 are joined by a disulfide. Gly125 is an ATP binding site. The interaction with tRNA stretch occupies residues 144-146; sequence KDQ. Cys194 (cysteine persulfide intermediate) is an active-site residue.

It belongs to the MnmA/TRMU family.

The protein resides in the cytoplasm. The catalysed reaction is S-sulfanyl-L-cysteinyl-[protein] + uridine(34) in tRNA + AH2 + ATP = 2-thiouridine(34) in tRNA + L-cysteinyl-[protein] + A + AMP + diphosphate + H(+). In terms of biological role, catalyzes the 2-thiolation of uridine at the wobble position (U34) of tRNA, leading to the formation of s(2)U34. This chain is tRNA-specific 2-thiouridylase MnmA, found in Frankia alni (strain DSM 45986 / CECT 9034 / ACN14a).